Consider the following 48-residue polypeptide: Large ribosomal subunit protein bL33 (48 aa).

This sequence belongs to the bacterial ribosomal protein bL33 family.

The chain is Large ribosomal subunit protein bL33 from Streptococcus mutans serotype c (strain ATCC 700610 / UA159).